A 326-amino-acid polypeptide reads, in one-letter code: Undecaprenyl-phosphate 4-deoxy-4-formamido-L-arabinose transferase (326 aa).

A run of 2 helical transmembrane segments spans residues 235 to 255 (LLSV…VLLI) and 270 to 290 (VFTL…GMGL).

This sequence belongs to the glycosyltransferase 2 family.

The protein localises to the cell inner membrane. It catalyses the reaction UDP-4-deoxy-4-formamido-beta-L-arabinose + di-trans,octa-cis-undecaprenyl phosphate = 4-deoxy-4-formamido-alpha-L-arabinopyranosyl di-trans,octa-cis-undecaprenyl phosphate + UDP. It functions in the pathway glycolipid biosynthesis; 4-amino-4-deoxy-alpha-L-arabinose undecaprenyl phosphate biosynthesis; 4-amino-4-deoxy-alpha-L-arabinose undecaprenyl phosphate from UDP-4-deoxy-4-formamido-beta-L-arabinose and undecaprenyl phosphate: step 1/2. Its pathway is bacterial outer membrane biogenesis; lipopolysaccharide biosynthesis. In terms of biological role, catalyzes the transfer of 4-deoxy-4-formamido-L-arabinose from UDP to undecaprenyl phosphate. The modified arabinose is attached to lipid A and is required for resistance to polymyxin and cationic antimicrobial peptides. The sequence is that of Undecaprenyl-phosphate 4-deoxy-4-formamido-L-arabinose transferase from Serratia proteamaculans (strain 568).